The primary structure comprises 448 residues: MRFRERQSLHLISLGCTKNLVDSEVMLGRLQSYTLTQELENADVIIINTCGFIESAKQESIQTIFHASSNRKRGALLVVSGCLAERYTKELKEEIPEIDIITGVSDYDKIDSMIAQRRSIESAKVFLADEHNERVIIGSSFHAYIKLSEGCNQACSFCAIPQFKGKLHSRTLQSTLKELTNLYNQGFRDFSFIAQDSSSYMRDLGQKDGLMQLIRAVDNLNLPISARILYLYPSSTSLQLIESIAQSKSFLPYFDMPIQHIADAMLKTMRRGADKATHLELLNAMRAVPHNFVRTSFIIGHPNEDEKAFLELHDFIESFAFDRINLFAYSPQEGTAADSMPNRPNTKITNQRINTLNKIIQSQYKAHNLALVGQEVDAILEGKSEVSEYFYKARLKLWGKDIDGEILINDSEIVDSNNQMLLLKEGYYRVQITQCKDNFLFGKALSHL.

Residues Gln7–Ser119 form the MTTase N-terminal domain. [4Fe-4S] cluster-binding residues include Cys16, Cys50, Cys82, Cys151, Cys155, and Cys158. The region spanning Ile137–Ala366 is the Radical SAM core domain.

The protein belongs to the methylthiotransferase family. RimO subfamily. [4Fe-4S] cluster is required as a cofactor.

The protein resides in the cytoplasm. It catalyses the reaction L-aspartate(89)-[ribosomal protein uS12]-hydrogen + (sulfur carrier)-SH + AH2 + 2 S-adenosyl-L-methionine = 3-methylsulfanyl-L-aspartate(89)-[ribosomal protein uS12]-hydrogen + (sulfur carrier)-H + 5'-deoxyadenosine + L-methionine + A + S-adenosyl-L-homocysteine + 2 H(+). Its function is as follows. Catalyzes the methylthiolation of an aspartic acid residue of ribosomal protein uS12. In Helicobacter hepaticus (strain ATCC 51449 / 3B1), this protein is Ribosomal protein uS12 methylthiotransferase RimO.